A 375-amino-acid chain; its full sequence is 23S rRNA (uracil(747)-C(5))-methyltransferase RlmC (375 aa).

[4Fe-4S] cluster contacts are provided by C3, C11, C14, and C87. S-adenosyl-L-methionine-binding residues include Q212, F241, E262, and N307. Catalysis depends on C334, which acts as the Nucleophile.

The protein belongs to the class I-like SAM-binding methyltransferase superfamily. RNA M5U methyltransferase family. RlmC subfamily.

The enzyme catalyses uridine(747) in 23S rRNA + S-adenosyl-L-methionine = 5-methyluridine(747) in 23S rRNA + S-adenosyl-L-homocysteine + H(+). Catalyzes the formation of 5-methyl-uridine at position 747 (m5U747) in 23S rRNA. The polypeptide is 23S rRNA (uracil(747)-C(5))-methyltransferase RlmC (Escherichia coli O17:K52:H18 (strain UMN026 / ExPEC)).